Here is a 693-residue protein sequence, read N- to C-terminus: Polyribonucleotide nucleotidyltransferase (693 aa).

Residues Asp-489 and Asp-495 each coordinate Mg(2+). The KH domain occupies 556-615 (PQIHVMNINPAKIKDVVGRGGATVKGIVEKTGAQIDTSDSGEVKVFAKDKKSMDMAVAMI). The region spanning 625–693 (GQVYKGKIVK…GRVKLSLVAR (69 aa)) is the S1 motif domain.

This sequence belongs to the polyribonucleotide nucleotidyltransferase family. As to quaternary structure, component of the RNA degradosome, which is a multiprotein complex involved in RNA processing and mRNA degradation. Mg(2+) is required as a cofactor.

Its subcellular location is the cytoplasm. The enzyme catalyses RNA(n+1) + phosphate = RNA(n) + a ribonucleoside 5'-diphosphate. Its function is as follows. Involved in mRNA degradation. Catalyzes the phosphorolysis of single-stranded polyribonucleotides processively in the 3'- to 5'-direction. This chain is Polyribonucleotide nucleotidyltransferase, found in Francisella tularensis subsp. holarctica (strain OSU18).